The chain runs to 981 residues: Ubiquitin carboxyl-terminal hydrolase 15 (981 aa).

The residue at position 2 (A2) is an N-acetylalanine. A mediates interaction with SART3 region spans residues 2–223; that stretch reads AEGGAADLDT…KNEDGTWPRG (222 aa). Residues 7–118 form the DUSP domain; the sequence is ADLDTQRSDI…GQEPIARKVV (112 aa). The disordered stretch occupies residues 216–237; that stretch reads EDGTWPRGPSTPKSPGASNFST. A Phosphothreonine modification is found at T226. Residues 226 to 237 are compositionally biased toward polar residues; sequence TPKSPGASNFST. Phosphoserine is present on residues S229 and S242. Residues 289 to 933 enclose the USP domain; the sequence is CGLSNLGNTC…AAYVLFYQRQ (645 aa). The active-site Nucleophile is C298. A Phosphothreonine modification is found at T602. The segment at 633 to 694 is disordered; it reads CCEDQNINGN…GGDNDSENGL (62 aa). Residues 656 to 673 are compositionally biased toward acidic residues; that stretch reads METDEPDDESSQDQELPS. H891 functions as the Proton acceptor in the catalytic mechanism. The disordered stretch occupies residues 952–981; sequence SAATGIPLESDEDSNDNDNDLENENCMHTN. The span at 960 to 974 shows a compositional bias: acidic residues; it reads ESDEDSNDNDNDLEN. Phosphoserine occurs at positions 961 and 965.

Belongs to the peptidase C19 family. As to quaternary structure, a homodimer structure has been reported; however it is unclear whether the protein form a homodimer in vivo. Identified in a complex with the COP9 signalosome complex (CSN). Interacts with SMAD1, SMAD2 and SMAD3; the interaction is direct. Forms a complex with SMURF2 and SMAD7. Interacts with TGFBR1. Interacts with SART3; the interaction is direct. May interact with RNF20 and RNF40. May interact with PRKN. Interacts with INCA1. In terms of processing, phosphorylated. Phosphorylation protects against ubiquitination and subsequent degradation by the proteasome. Post-translationally, ubiquitinated, leading to degradation by the proteasome. Widely expressed with highest levels in the brain and spleen, and lowest levels in the muscles (at protein level). In the midbrain, strong expression in neurons including the dopaminergic neurons (at protein level). Widely expressed with highest levels in testis, heart and liver.

It is found in the cytoplasm. It localises to the nucleus. Its subcellular location is the mitochondrion. The catalysed reaction is Thiol-dependent hydrolysis of ester, thioester, amide, peptide and isopeptide bonds formed by the C-terminal Gly of ubiquitin (a 76-residue protein attached to proteins as an intracellular targeting signal).. Its function is as follows. Hydrolase that removes conjugated ubiquitin from target proteins and regulates various pathways such as the TGF-beta receptor signaling, NF-kappa-B and RNF41/NRDP1-PRKN pathways. Acts as a key regulator of TGF-beta receptor signaling pathway, but the precise mechanism is still unclear: according to a report, acts by promoting deubiquitination of monoubiquitinated R-SMADs (SMAD1, SMAD2 and/or SMAD3), thereby alleviating inhibition of R-SMADs and promoting activation of TGF-beta target genes. According to another reports, regulates the TGF-beta receptor signaling pathway by mediating deubiquitination and stabilization of TGFBR1, leading to an enhanced TGF-beta signal. Able to mediate deubiquitination of monoubiquitinated substrates, 'Lys-27'-, 'Lys-48'- and 'Lys-63'-linked polyubiquitin chains. May also regulate gene expression and/or DNA repair through the deubiquitination of histone H2B. Acts as an inhibitor of mitophagy by counteracting the action of parkin (PRKN): hydrolyzes cleavage of 'Lys-48'- and 'Lys-63'-linked polyubiquitin chains attached by parkin on target proteins such as MFN2, thereby reducing parkin's ability to drive mitophagy. Acts as an associated component of COP9 signalosome complex (CSN) and regulates different pathways via this association: regulates NF-kappa-B by mediating deubiquitination of NFKBIA and deubiquitinates substrates bound to VCP. Involved in endosome organization by mediating deubiquitination of SQSTM1: ubiquitinated SQSTM1 forms a molecular bridge that restrains cognate vesicles in the perinuclear region and its deubiquitination releases target vesicles for fast transport into the cell periphery. Acts as a negative regulator of antifungal immunity by mediating 'Lys-27'-linked deubiquitination of CARD9, thereby inactivating CARD9. This Mus musculus (Mouse) protein is Ubiquitin carboxyl-terminal hydrolase 15 (Usp15).